A 257-amino-acid chain; its full sequence is Imidazole glycerol phosphate synthase subunit HisF (257 aa).

Active-site residues include D11 and D130.

It belongs to the HisA/HisF family. As to quaternary structure, heterodimer of HisH and HisF.

The protein localises to the cytoplasm. The enzyme catalyses 5-[(5-phospho-1-deoxy-D-ribulos-1-ylimino)methylamino]-1-(5-phospho-beta-D-ribosyl)imidazole-4-carboxamide + L-glutamine = D-erythro-1-(imidazol-4-yl)glycerol 3-phosphate + 5-amino-1-(5-phospho-beta-D-ribosyl)imidazole-4-carboxamide + L-glutamate + H(+). The protein operates within amino-acid biosynthesis; L-histidine biosynthesis; L-histidine from 5-phospho-alpha-D-ribose 1-diphosphate: step 5/9. In terms of biological role, IGPS catalyzes the conversion of PRFAR and glutamine to IGP, AICAR and glutamate. The HisF subunit catalyzes the cyclization activity that produces IGP and AICAR from PRFAR using the ammonia provided by the HisH subunit. The sequence is that of Imidazole glycerol phosphate synthase subunit HisF from Afipia carboxidovorans (strain ATCC 49405 / DSM 1227 / KCTC 32145 / OM5) (Oligotropha carboxidovorans).